The chain runs to 331 residues: Biotin synthase (331 aa).

Residues Tyr-46–Arg-275 form the Radical SAM core domain. [4Fe-4S] cluster contacts are provided by Cys-64, Cys-68, and Cys-71. Positions 108, 140, 200, and 270 each coordinate [2Fe-2S] cluster.

The protein belongs to the radical SAM superfamily. Biotin synthase family. Homodimer. Requires [4Fe-4S] cluster as cofactor. [2Fe-2S] cluster serves as cofactor.

The catalysed reaction is (4R,5S)-dethiobiotin + (sulfur carrier)-SH + 2 reduced [2Fe-2S]-[ferredoxin] + 2 S-adenosyl-L-methionine = (sulfur carrier)-H + biotin + 2 5'-deoxyadenosine + 2 L-methionine + 2 oxidized [2Fe-2S]-[ferredoxin]. It functions in the pathway cofactor biosynthesis; biotin biosynthesis; biotin from 7,8-diaminononanoate: step 2/2. Functionally, catalyzes the conversion of dethiobiotin (DTB) to biotin by the insertion of a sulfur atom into dethiobiotin via a radical-based mechanism. This Lysinibacillus sphaericus (strain C3-41) protein is Biotin synthase.